We begin with the raw amino-acid sequence, 950 residues long: Protocadherin alpha-1 (950 aa).

Residues 1–29 form the signal peptide; the sequence is MVFSRRGGLGARDLLLWLLLLAAWEVGSG. 6 Cadherin domains span residues 30–133, 157–242, 243–350, 351–455, 456–565, and 588–678; these read QLHY…PPVF, AADA…APLF, DQAV…APEL, AVTS…APAF, AQPE…APAL, and GHVV…APKA. The Extracellular portion of the chain corresponds to 30-697; that stretch reads QLHYSIPEEA…GPEAALVDVN (668 aa). Residues Asn-257 and Asn-265 are each glycosylated (N-linked (GlcNAc...) asparagine). Asn-548 carries an N-linked (GlcNAc...) asparagine glycan. The helical transmembrane segment at 698–718 threads the bilayer; the sequence is VYLIIAICAVSSLLVLTLLLY. At 719 to 950 the chain is on the cytoplasmic side; the sequence is TALRCSVPPT…GNSTTDNSDQ (232 aa). 5 PXXP repeats span residues 734–737, 799–802, 832–835, 873–876, and 891–894; these read PGKP, PRQP, PGGP, PGNP, and PGSP. The tract at residues 734–894 is 5 X 4 AA repeats of P-X-X-P; sequence PGKPTLVCSS…PDKFIIPGSP (161 aa). Disordered stretches follow at residues 752–808, 828–856, and 871–890; these read QQRR…DWRY, LRAG…EVSP, and YGPG…KFII. The segment at 900–950 is disordered; sequence RQEPTNSQIDKSDFITFGKKEETKKKKKKKKGNKTQEKKEKGNSTTDNSDQ. Residues 909 to 923 show a composition bias toward basic and acidic residues; that stretch reads DKSDFITFGKKEETK.

It localises to the cell membrane. The protein resides in the secreted. Its function is as follows. Potential calcium-dependent cell-adhesion protein. May be involved in the establishment and maintenance of specific neuronal connections in the brain. This Homo sapiens (Human) protein is Protocadherin alpha-1 (PCDHA1).